We begin with the raw amino-acid sequence, 254 residues long: 3-deoxy-manno-octulosonate cytidylyltransferase (254 aa).

It belongs to the KdsB family.

The protein resides in the cytoplasm. The enzyme catalyses 3-deoxy-alpha-D-manno-oct-2-ulosonate + CTP = CMP-3-deoxy-beta-D-manno-octulosonate + diphosphate. It functions in the pathway nucleotide-sugar biosynthesis; CMP-3-deoxy-D-manno-octulosonate biosynthesis; CMP-3-deoxy-D-manno-octulosonate from 3-deoxy-D-manno-octulosonate and CTP: step 1/1. The protein operates within bacterial outer membrane biogenesis; lipopolysaccharide biosynthesis. In terms of biological role, activates KDO (a required 8-carbon sugar) for incorporation into bacterial lipopolysaccharide in Gram-negative bacteria. This is 3-deoxy-manno-octulosonate cytidylyltransferase from Chlamydia caviae (strain ATCC VR-813 / DSM 19441 / 03DC25 / GPIC) (Chlamydophila caviae).